A 147-amino-acid chain; its full sequence is Protein archease (147 aa).

Ca(2+)-binding residues include aspartate 17, aspartate 146, and valine 147.

This sequence belongs to the archease family.

Its function is as follows. Activates the tRNA-splicing ligase complex by facilitating the enzymatic turnover of catalytic subunit RtcB. Acts by promoting the guanylylation of RtcB, a key intermediate step in tRNA ligation. Can also alter the NTP specificity of RtcB such that ATP, dGTP or ITP is used efficiently. This chain is Protein archease, found in Pyrobaculum islandicum (strain DSM 4184 / JCM 9189 / GEO3).